The following is a 571-amino-acid chain: Proline--tRNA ligase (571 aa).

This sequence belongs to the class-II aminoacyl-tRNA synthetase family. ProS type 1 subfamily. As to quaternary structure, homodimer.

Its subcellular location is the cytoplasm. The enzyme catalyses tRNA(Pro) + L-proline + ATP = L-prolyl-tRNA(Pro) + AMP + diphosphate. In terms of biological role, catalyzes the attachment of proline to tRNA(Pro) in a two-step reaction: proline is first activated by ATP to form Pro-AMP and then transferred to the acceptor end of tRNA(Pro). As ProRS can inadvertently accommodate and process non-cognate amino acids such as alanine and cysteine, to avoid such errors it has two additional distinct editing activities against alanine. One activity is designated as 'pretransfer' editing and involves the tRNA(Pro)-independent hydrolysis of activated Ala-AMP. The other activity is designated 'posttransfer' editing and involves deacylation of mischarged Ala-tRNA(Pro). The misacylated Cys-tRNA(Pro) is not edited by ProRS. The polypeptide is Proline--tRNA ligase (Pseudomonas syringae pv. tomato (strain ATCC BAA-871 / DC3000)).